Consider the following 288-residue polypeptide: Homoserine kinase (288 aa).

Proline 78–serine 88 contacts ATP.

This sequence belongs to the GHMP kinase family. Homoserine kinase subfamily.

The protein resides in the cytoplasm. It carries out the reaction L-homoserine + ATP = O-phospho-L-homoserine + ADP + H(+). The protein operates within amino-acid biosynthesis; L-threonine biosynthesis; L-threonine from L-aspartate: step 4/5. Its function is as follows. Catalyzes the ATP-dependent phosphorylation of L-homoserine to L-homoserine phosphate. The chain is Homoserine kinase from Streptococcus agalactiae serotype III (strain NEM316).